A 467-amino-acid chain; its full sequence is Acetaldehyde dehydrogenase (acetylating) EutE (467 aa).

The targets protein to the BMC stretch occupies residues 1–19 (MNQQDIEQVVKAVLLKMKD).

Belongs to the EutE/PduP family. In terms of assembly, interacts with EutS, which targets it to the interior of the BMC.

It localises to the bacterial microcompartment. It catalyses the reaction acetaldehyde + NAD(+) + CoA = acetyl-CoA + NADH + H(+). It participates in amine and polyamine degradation; ethanolamine degradation. In terms of biological role, acts as the second step in ethanolamine degradation by converting acetaldehyde into acetyl-CoA. Has a very strong preference for NAD(+) over NADP(+) in both catalytic directions. May play a role in bacterial microcompartment (BMC) assembly or maintenance. Directly targeted to the BMC. Expression of the eut operon allows this bacteria to use ethanolamine (EA) as a carbon, nitrogen and energy source. It relies on cobalamin (vitamin B12) both as a cofactor for the ethanolamine ammonia-lyase (EAL) activity and to induce the operon. EA enhances bacterial survival in macrophages in a concentration-dependent manner, suggesting it is an important nutrient during infection. This is Acetaldehyde dehydrogenase (acetylating) EutE from Salmonella typhimurium (strain LT2 / SGSC1412 / ATCC 700720).